The primary structure comprises 84 residues: Beta-defensin 119 (84 aa).

Residues 1 to 21 (MKLLYLFLAILLAIEEPVISG) form the signal peptide. 3 disulfide bridges follow: Cys-28-Cys-55, Cys-35-Cys-49, and Cys-39-Cys-56.

The protein belongs to the beta-defensin family.

It is found in the secreted. Its function is as follows. Has antibacterial activity. This chain is Beta-defensin 119 (DEFB119), found in Gorilla gorilla gorilla (Western lowland gorilla).